Consider the following 859-residue polypeptide: Cadherin-related family member 1 (859 aa).

The first 19 residues, 1–19, serve as a signal peptide directing secretion; that stretch reads MRRCRWAALALGLLRLCLA. At 20–700 the chain is on the extracellular side; sequence QANFAPHFFD…LIQTKDNPMK (681 aa). Cadherin domains lie at 36–135, 136–246, 247–353, 359–472, 473–576, and 573–688; these read NGNM…APRF, IQEP…APVF, VGTP…PPTF, PQNR…VPKF, DSLY…PPQF, and PPQF…SPMA. 2 N-linked (GlcNAc...) asparagine glycosylation sites follow: asparagine 58 and asparagine 89. N-linked (GlcNAc...) asparagine glycosylation is present at asparagine 296. A helical membrane pass occupies residues 701 to 721; that stretch reads AVGVLAGTMATVVAITVLIST. The Cytoplasmic portion of the chain corresponds to 722–859; sequence ATFWRNKKSN…KKSVHNKAYF (138 aa). The tract at residues 770-838 is disordered; it reads KEKPPNENCN…PKTMGSPVQS (69 aa). The span at 775–791 shows a compositional bias: low complexity; the sequence is NENCNNNSPESSLLPRA.

As to quaternary structure, interacts with PROM1. In terms of processing, undergoes proteolytic cleavage; produces a soluble 95 kDa N-terminal fragment and a 25 kDa cell-associated C-terminal fragment.

The protein localises to the cell membrane. Its function is as follows. Potential calcium-dependent cell-adhesion protein. May be required for the structural integrity of the outer segment (OS) of photoreceptor cells. The chain is Cadherin-related family member 1 from Homo sapiens (Human).